The sequence spans 983 residues: UPF0182 protein CMM_1204 (983 aa).

7 helical membrane passes run 16-36 (LAIT…FAGF), 56-76 (WGAG…PVFV), 108-128 (LAMF…ASSG), 161-181 (FYHA…LGVL), 205-225 (IQIA…IWLD), 255-275 (AILA…AVIG), and 281-301 (IIGT…YPAI). Residues 699–714 (QDLWTTPNDPTATTEA) are compositionally biased toward polar residues. Disordered stretches follow at residues 699-718 (QDLW…GTPA) and 884-936 (DSGA…AQDV). Over residues 902–918 (GGTGDGATDGATDGGTG) the composition is skewed to gly residues. The span at 919–933 (STPTPAPTTSPSAPA) shows a compositional bias: low complexity.

Belongs to the UPF0182 family.

The protein resides in the cell membrane. In Clavibacter michiganensis subsp. michiganensis (strain NCPPB 382), this protein is UPF0182 protein CMM_1204.